The chain runs to 1202 residues: MTVFIGIYKAIYNYEPQTPDELTIQEDDLLYLLEKSNVDDWWTVKKRVIGSDIDEPAGLVPSNYVEVADVISQVKAVYDYHEVQNPDEELVFNENDTFDVYDDKDPDWILARSISTNQFGFIPGNYVEPLNAETGSAVPPSQPAAAAALPPPIATSATSPPAPALTAIDISTLPPPPQHSSKTNAQASDSGNRDYADKDLPDLPPNKPSRSNTETNEDDYYDAPPTKPARPNSTSNEQDTRQKARSRTSYYDQHYEDDAEDYRSSQRDDDYNDSEPSGELRTWNVAEIEGRKKRKAKLSIGNNRLFFSPQKGSPQDWSVDKLISYDNEKKHLFLEFVDPYKSLELHTGDNDTCKEILSVIGEIKGASRDPGFKEVEMASKSKKKGNVLYDFTAESNDELTIKQGQVVYIINDQKSKDWWLCELIDSGKRGVVPSHFIEPIQEKLTSSHTGGLFKSIKKFAKGGKSSKASDDAYSGSWEDDGMEGSTERRSRSGSYSTRKRASSTTSKKELPNPKKSRIWEDRSGTFKVEAQFIGCKEGKVHLHKANGVKIAVAAEKLSDDDLVYVERVTGFSLDKYKVRGSGTSSSRQDPRESERERRRRLRENDEKDRDRRLRERELNELQKARQLLDNERTKLQEQNEQPPSKPPRPSSGMGNRSRSQSTKDNYDWFEFFLNSGVDVSSCQRYTSNFEKERITEDMMVDINDSILRTLGLREGDIVRVMKYLDKKLGRDVSPQTAVVAGGMFSEADGSLKNNNSENQSSVGQQLLPNNPDLVSNTPIDDDTWTVRPAAKSEATLAPKTAEFTGSMQDLLDLKPLEPKKTEQLPIANLAVTESVVPEPNLKNLEPVRTGNVVQKPLANTLTGGATLVPLDPFKTGGNNVLPVTTGFVMMPFATGGAMPIQRTGGIIVPQTTFGTNAAGGIMPAQITGGLIPVATTGGLMPQTSFGVTPVANVVPLQRTGGAVMPIATTGGANILPQTTFNLPPSGTVLPIQRTANGLMAANTTGGMMPLNTTGGMMPLNTTGGMIPLNTTGGMMPMNTTGGVMSLQRTGGMMPQTSFGTQQMTGGAMNMMPQISFGAQQMTGGAMNVFPQTSFGAQQMTGGAMQNPNMGTMQNPNMGVMQNPNMGAFQPKSQFGMTLQRTGGAMAQPIMDAGVTGIAQGVQNMSMAQPLQNQPTGFGFGNGPQQPVQANIYNASASNPFGF.

SH3 domains lie at valine 3–valine 70 and isoleucine 71–alanine 132. The tract at residues glutamate 133–glycine 278 is disordered. Positions serine 136 to alanine 167 are enriched in low complexity. Positions histidine 179–serine 190 are enriched in polar residues. Basic and acidic residues-rich tracts occupy residues glycine 191–proline 201 and glutamine 253–aspartate 269. In terms of domain architecture, SH3 3 spans lysine 380–glutamate 442. 4 disordered regions span residues glycine 462–isoleucine 518, lysine 577–arginine 609, glutamine 622–serine 661, and glycine 749–asparagine 770. Composition is skewed to basic and acidic residues over residues serine 506–isoleucine 518, glutamine 588–arginine 609, and glutamine 622–glutamate 637. Polar residues-rich tracts occupy residues glycine 652–serine 661 and leucine 751–asparagine 770.

The protein belongs to the SLA1 family. In terms of assembly, component of the PAN1 actin cytoskeleton-regulatory complex.

The protein resides in the cell membrane. The protein localises to the endosome membrane. Its subcellular location is the cytoplasm. It is found in the cytoskeleton. It localises to the actin patch. Functionally, component of the PAN1 actin cytoskeleton-regulatory complex required for the internalization of endosomes during actin-coupled endocytosis. The complex links the site of endocytosis to the cell membrane-associated actin cytoskeleton. Mediates uptake of external molecules and vacuolar degradation of plasma membrane proteins. Plays a role in the proper organization of the cell membrane-associated actin cytoskeleton and promotes its destabilization. In Vanderwaltozyma polyspora (strain ATCC 22028 / DSM 70294 / BCRC 21397 / CBS 2163 / NBRC 10782 / NRRL Y-8283 / UCD 57-17) (Kluyveromyces polysporus), this protein is Actin cytoskeleton-regulatory complex protein SLA1 (SLA1).